The primary structure comprises 259 residues: Thiazole synthase (259 aa).

The active-site Schiff-base intermediate with DXP is the K100. Residues G161, 187–188 (AG), and 209–210 (NT) contribute to the 1-deoxy-D-xylulose 5-phosphate site.

It belongs to the ThiG family. As to quaternary structure, homotetramer. Forms heterodimers with either ThiH or ThiS.

Its subcellular location is the cytoplasm. It carries out the reaction [ThiS sulfur-carrier protein]-C-terminal-Gly-aminoethanethioate + 2-iminoacetate + 1-deoxy-D-xylulose 5-phosphate = [ThiS sulfur-carrier protein]-C-terminal Gly-Gly + 2-[(2R,5Z)-2-carboxy-4-methylthiazol-5(2H)-ylidene]ethyl phosphate + 2 H2O + H(+). Its pathway is cofactor biosynthesis; thiamine diphosphate biosynthesis. Catalyzes the rearrangement of 1-deoxy-D-xylulose 5-phosphate (DXP) to produce the thiazole phosphate moiety of thiamine. Sulfur is provided by the thiocarboxylate moiety of the carrier protein ThiS. In vitro, sulfur can be provided by H(2)S. The sequence is that of Thiazole synthase from Methylobacillus flagellatus (strain ATCC 51484 / DSM 6875 / VKM B-1610 / KT).